The following is a 302-amino-acid chain: MASKAHPVATTAAADWRDFLALTKPRVLTLVVFTGWCGLLAAPQSIHPVLGFTAVLCIALGAGAAGALNQWYEADLDAMMARTANRPLPAGRMDRQSALHFGVGLGIFSVLLMGLALNVLAAAILAVSILFYVVVYTIWLKRRTPQNIVIGGAAGAFPALIGWAAATGRVETLPVLLFALVFLWTPPHFWALALFINSDYARAGVPMLPAVAGQRATRIQIMLYTVPMVIAAVAPWAMGLTGAIYGIGASLLSALFLLLAAQVGFSREADPARMKAERRLFGFSILYLFLIFGLVVADKVLA.

A run of 9 helical transmembrane segments spans residues 27–47, 48–68, 97–117, 119–139, 148–168, 176–196, 219–239, 240–260, and 280–300; these read VLTL…QSIH, PVLG…AGAL, SALH…GLAL, VLAA…YTIW, IVIG…AATG, LLFA…ALFI, IQIM…WAMG, LTGA…LLLA, and LFGF…ADKV.

This sequence belongs to the UbiA prenyltransferase family. Protoheme IX farnesyltransferase subfamily.

The protein localises to the cell inner membrane. It carries out the reaction heme b + (2E,6E)-farnesyl diphosphate + H2O = Fe(II)-heme o + diphosphate. It functions in the pathway porphyrin-containing compound metabolism; heme O biosynthesis; heme O from protoheme: step 1/1. Converts heme B (protoheme IX) to heme O by substitution of the vinyl group on carbon 2 of heme B porphyrin ring with a hydroxyethyl farnesyl side group. This chain is Protoheme IX farnesyltransferase, found in Rhizorhabdus wittichii (strain DSM 6014 / CCUG 31198 / JCM 15750 / NBRC 105917 / EY 4224 / RW1) (Sphingomonas wittichii).